The following is a 405-amino-acid chain: Probable dual specificity protein kinase YAK1 homolog (405 aa).

The Protein kinase domain maps to 40–335 (YMIIDMLGTG…AKSLASHSYL (296 aa)). ATP is bound by residues 46–54 (LGTGTFGQV) and Lys68. Catalysis depends on Asp163, which acts as the Proton acceptor.

This sequence belongs to the protein kinase superfamily. CMGC Ser/Thr protein kinase family. MNB/DYRK subfamily.

Its subcellular location is the cytoplasm. It is found in the nucleus. It catalyses the reaction L-seryl-[protein] + ATP = O-phospho-L-seryl-[protein] + ADP + H(+). It carries out the reaction L-threonyl-[protein] + ATP = O-phospho-L-threonyl-[protein] + ADP + H(+). The catalysed reaction is L-tyrosyl-[protein] + ATP = O-phospho-L-tyrosyl-[protein] + ADP + H(+). Its function is as follows. Negative regulator of the cell cycle acting downstream of the cAMP-dependent protein kinase. Part of a glucose-sensing system involved in growth control in response to glucose availability. In Encephalitozoon cuniculi (strain GB-M1) (Microsporidian parasite), this protein is Probable dual specificity protein kinase YAK1 homolog (YAK1).